A 495-amino-acid chain; its full sequence is MAKNKIRVRYAPSPTGHLHIGNARTALFNYLFARHNKGTFVLRIEDTDTKRNIADGEKSQMDNLEWLGIDWDEGPDKPGKYGPYRQSERKDIYKPLIQELLDKDLAYESFMTEEELQAQREEQKARGEAPRYVYEYEGMSKEEIKKAQDEARAKGLKPVVRIRVPHNKTYEWDDIVKGKISFLSDTIGGDFVIQKRDGMPTYNFAVVVDDHLMEITHVLRGDDHVANTPKQLVVYEAFGWKAPEFGHMSLIINTETGKKLSKRDETVLQFIEQYRELGYLPDAMFNFITLLGWSPVGESEIFNKQEFIKMFDAKRLSKSPAAFDGKKLEWINNQYVKAAKEDEIMDSSLRQLIKAGKVQADPDAYTIEWARKLISLYKQQMSYTGQIVEMADVFFNEPPVLSEDAKKELADESAAIVLKEFAERVKDLPIFDAVEIQNTIRSIQKDTKIKGRKLYMPIRIATTREMHGPELAPSIELLGREKALKHLKQTLEEMN.

The 'HIGH' region signature appears at 12–22 (PSPTGHLHIGN). The short motif at 259 to 263 (KLSKR) is the 'KMSKS' region element. ATP is bound at residue Lys262.

The protein belongs to the class-I aminoacyl-tRNA synthetase family. Glutamate--tRNA ligase type 1 subfamily. Monomer.

The protein localises to the cytoplasm. It carries out the reaction tRNA(Glu) + L-glutamate + ATP = L-glutamyl-tRNA(Glu) + AMP + diphosphate. Its function is as follows. Catalyzes the attachment of glutamate to tRNA(Glu) in a two-step reaction: glutamate is first activated by ATP to form Glu-AMP and then transferred to the acceptor end of tRNA(Glu). This is Glutamate--tRNA ligase from Ligilactobacillus salivarius (strain UCC118) (Lactobacillus salivarius).